The primary structure comprises 1524 residues: MAAVYSGISLKLKSKTTSWEDKLKLAHFAWISHQCFLPNKEQVLLDWARQSLVAFYKKKLELKEDIVERLWIYIDNILHSRKLQNLLKNGKTINLQISLVKIINERVAEFSLSGSQRNICAVLRCCQGILSTPALAVIYTAKQELMVALLSQLCWSACRQPEGAVVAQLFEVIHLALGHYLLILQQQVNPRRAFGDVTAHLLQPCLVLRHLLSGGTWTQAGQGQLRQVLSRDIRSQIEAMFRGGIFQPELLSSYKEGLLDQQQGDVKTGAMKNLLAPMDTVLNRLVDAGYCAASLHTSVVANSVALLYKLFLDSYFKEGNQLLCFQVLPRLFGCLKISHLQEEQSKALSTSDWTTELLVVEQLLNSVANNNIYNIAADRIRHEEAQFRFYRHVAELLINHAQAPIPAWFRCLKTLISLNHLILEPDLDDLLASAWIDAEVTEFRTKKAQEALIRTVFQTYAKLRQVPRLFEEVLGVICRPAAEALRQPVLASGPSTVLSACLLELPPSQILDTWSLVLEKFQSLVLPYLQSDADMALKSLSLSLLLHCIMFNMRSLDSSTPLPIVRRTQCMMERMMRELVQPLLALLPDTPGPEPELWLQKVSDSVLLLSYTWAQVDAMFSLNCSQYHSMSGPLIGVALEISNLPSLLPGVKTQHWKKIEKFTAQFSSLGTYCLEQLYLQKMKRTLMQTSFRSEGAIQSLRCDAAFIIGSGRKSLNQRTTASWDGQVGMVSGLTYPVAHWHLIVSNLTILISYLCPDDVGYLASVLLRTLPMGKAQEVSIDEEAYITLEKISKAFLHSPLFPEMQSLHSAFLTCVTTSCSSILCSGAQRDSGLVSQQLPWLFEKDHMVVGHWENRFAKAGPEGIEPRGEIAQNLLSLVKSDFPIQLEGEQLESILGLLEVISALQLDSLLPPYHVHYFLVLLSMAVTKLGCSCSSSLALKFLTTCYQLLGYLQKGKSARSVFKIMYGSDIFEVVLTSLFRASSRFLIEMDDPAWLEFLQVIGTFLEELMQMLIQMKLSLVLNFRKITAFLSSSKPYTEAASSKQLENQNPQGRQLLLVSLTRLCHVLGPFLKEQKLGQEAPAALSELLQQVVLQTGAVLQLCSVPGARGWRLPSVLISSVSTLLEADLGQHCRDGGADISQGSDRTLLSHVALYQGVYSQILLELPALAGHDQSFQAALQFLTLFFLAPELHPKKDSVFTSMFHSVRRVLADPEIPVQVTQDIEPHLGALFTQMLEVGTTEDLRLVMQCILQGLDVSNMWKADVQAVVSAVTLLRLLLNCPLSGEKASLLWRACPQIVTALTLLNREASQEQPVSLTVVGPVLDVLAALLRQGEEAIGNPHHVSLAFSILLTVPLDHLKPLEYGSVFPRLHNVLFSILQCHPKVMLKAIPSFLNSFNRLVFSVMREGRQKDKGSIDDLPTVLKCARLVERMYSHIAARAEEFAVFSPFMVAQYVLEVQKVTLYPAVKSLLQEGIYLILDLCIEPDVQFLRASLQPGMRDIFKELYNDYLKYHKAKHEGEKRYTA.

Its subcellular location is the nucleus. It localises to the nucleolus. Functionally, essential for hematopietic stem cell development through the regulation of p53/TP53 pathway. The chain is Unhealthy ribosome biogenesis protein 2 homolog (URB2) from Homo sapiens (Human).